The following is a 357-amino-acid chain: MEKGMDVLHDFGIQSTHYLQVNYQDSQDWFILVSVIADLRNAFYVLFPIWFHLREAVGIKLLWVAVIGDWLNLVFKWILFGQRPYWWVMDTDYYSNTSVPLIKQFPVTCETGPGSPSGHAMGTAGVYYVMVTSTLSIFRGRKRPTYRFRCLNILLWLGFWAVQLNVCLSRIYLAAHFPHQVVAGVLSGIAVAETFRHIQSIYNASLKKYFLITFFLFSFAIGFYLLLKGLGVDLLWTLEKARRWCERPEWVHIDTTPFASLLKNVGTLFGLGVTLNSSMYRESCKGKLSKWFPFRLSCIVVSLILLHLFDSLKPPSQTELIFYTLSFCKSAAVPLASVSLIPYCLARVFDQPDKKSL.

At 1-28 the chain is on the lumenal side; the sequence is MEKGMDVLHDFGIQSTHYLQVNYQDSQD. Residues 29–49 traverse the membrane as a helical segment; the sequence is WFILVSVIADLRNAFYVLFPI. Over 50 to 60 the chain is Cytoplasmic; the sequence is WFHLREAVGIK. The helical transmembrane segment at 61-81 threads the bilayer; sequence LLWVAVIGDWLNLVFKWILFG. At 82 to 117 the chain is on the lumenal side; that stretch reads QRPYWWVMDTDYYSNTSVPLIKQFPVTCETGPGSPS. Position 83 (arginine 83) interacts with substrate. Residue asparagine 96 is glycosylated (N-linked (GlcNAc...) asparagine). The chain crosses the membrane as a helical span at residues 118 to 138; it reads GHAMGTAGVYYVMVTSTLSIF. The Proton donor role is filled by histidine 119. Residues 139-147 lie on the Cytoplasmic side of the membrane; the sequence is RGRKRPTYR. A helical transmembrane segment spans residues 148-168; it reads FRCLNILLWLGFWAVQLNVCL. The Lumenal portion of the chain corresponds to 169–170; the sequence is SR. Substrate is bound at residue arginine 170. The chain crosses the membrane as a helical span at residues 171-191; that stretch reads IYLAAHFPHQVVAGVLSGIAV. Histidine 176 (nucleophile) is an active-site residue. At 192–209 the chain is on the cytoplasmic side; it reads AETFRHIQSIYNASLKKY. Residues 210-230 traverse the membrane as a helical segment; the sequence is FLITFFLFSFAIGFYLLLKGL. Residues 231-254 are Lumenal-facing; it reads GVDLLWTLEKARRWCERPEWVHID. A helical membrane pass occupies residues 255 to 275; the sequence is TTPFASLLKNVGTLFGLGVTL. Topologically, residues 276–291 are cytoplasmic; the sequence is NSSMYRESCKGKLSKW. The helical transmembrane segment at 292–312 threads the bilayer; that stretch reads FPFRLSCIVVSLILLHLFDSL. Residues 313–320 lie on the Lumenal side of the membrane; it reads KPPSQTEL. Residues 321–341 traverse the membrane as a helical segment; that stretch reads IFYTLSFCKSAAVPLASVSLI. Over 342-357 the chain is Cytoplasmic; it reads PYCLARVFDQPDKKSL. The short motif at 354-357 is the Prevents secretion from ER element; the sequence is KKSL.

It belongs to the glucose-6-phosphatase family.

The protein resides in the endoplasmic reticulum membrane. It catalyses the reaction D-glucose 6-phosphate + H2O = D-glucose + phosphate. It participates in carbohydrate biosynthesis; gluconeogenesis. Functionally, hydrolyzes glucose-6-phosphate to glucose in the endoplasmic reticulum. Forms with the glucose-6-phosphate transporter (SLC37A4/G6PT) the complex responsible for glucose production in the terminal step of glycogenolysis and gluconeogenesis. Hence, it is the key enzyme in homeostatic regulation of blood glucose levels. The protein is Glucose-6-phosphatase catalytic subunit 1 (G6PC1) of Canis lupus familiaris (Dog).